The sequence spans 246 residues: 3-oxoacyl-[acyl-carrier-protein] reductase FabG (246 aa).

Residues 11–14 (GASR), Ser-36, 62–63 (DV), and Asn-89 each bind NADP(+). Ser-141 provides a ligand contact to substrate. The Proton acceptor role is filled by Tyr-154. Residues 154-158 (YVAAK) and Ile-187 each bind NADP(+).

It belongs to the short-chain dehydrogenases/reductases (SDR) family. As to quaternary structure, homotetramer.

It catalyses the reaction a (3R)-hydroxyacyl-[ACP] + NADP(+) = a 3-oxoacyl-[ACP] + NADPH + H(+). It functions in the pathway lipid metabolism; fatty acid biosynthesis. Its function is as follows. Catalyzes the NADPH-dependent reduction of beta-ketoacyl-ACP substrates to beta-hydroxyacyl-ACP products, the first reductive step in the elongation cycle of fatty acid biosynthesis. In Bacillus subtilis (strain 168), this protein is 3-oxoacyl-[acyl-carrier-protein] reductase FabG (fabG).